A 137-amino-acid chain; its full sequence is Kunitz-type trypsin inhibitor alpha chain (137 aa).

Cys40 and Cys86 are joined by a disulfide.

The protein belongs to the protease inhibitor I3 (leguminous Kunitz-type inhibitor) family. In terms of assembly, heterodimer of an alpha and a beta chain linked by a disulfide bond.

Functionally, inhibition of trypsin. The polypeptide is Kunitz-type trypsin inhibitor alpha chain (Neltuma juliflora (Mesquite)).